Here is a 510-residue protein sequence, read N- to C-terminus: Inositol-3-phosphate synthase (510 aa).

NAD(+)-binding residues include Gly70, Gly71, Asn72, Asn73, Asp143, Ile180, Gln190, Arg193, Thr230, Ala231, Asn232, Thr233, Gly281, Ser282, Asp306, Ser309, Asn340, Asn341, Asp342, Lys355, Gly393, Asp394, Asp422, and Ser423.

Belongs to the myo-inositol 1-phosphate synthase family. It depends on NAD(+) as a cofactor.

It is found in the cytoplasm. The protein resides in the cytosol. The protein localises to the nucleus. It catalyses the reaction D-glucose 6-phosphate = 1D-myo-inositol 3-phosphate. It participates in polyol metabolism; myo-inositol biosynthesis; myo-inositol from D-glucose 6-phosphate: step 1/2. Functionally, key enzyme in myo-inositol biosynthesis pathway that catalyzes the conversion of glucose 6-phosphate to 1-myo-inositol 1-phosphate in a NAD-dependent manner. The sequence is that of Inositol-3-phosphate synthase (TUR1) from Spirodela polyrhiza (Giant duckweed).